The sequence spans 258 residues: Probable glycerol uptake facilitator protein (258 aa).

2 helical membrane-spanning segments follow: residues 11-31 and 50-70; these read WWFL…NGAV and TVAL…NAIF. The NPA 1 signature appears at 77–79; the sequence is NPA. 3 consecutive transmembrane segments (helical) span residues 95–115, 152–172, and 180–200; these read ALIW…AMIA, FLTE…ASHF, and VPPG…FGGA. The NPA 2 signature appears at 206–208; sequence NPA. A helical membrane pass occupies residues 233–253; that stretch reads WIPVIAPLSAGLVLSIIIGFS.

Belongs to the MIP/aquaporin (TC 1.A.8) family.

Its subcellular location is the cell membrane. The catalysed reaction is glycerol(in) = glycerol(out). In terms of biological role, mediates glycerol diffusion across the cytoplasmic membrane via a pore-type mechanism. The protein is Probable glycerol uptake facilitator protein (glpF) of Mycoplasma genitalium (strain ATCC 33530 / DSM 19775 / NCTC 10195 / G37) (Mycoplasmoides genitalium).